Reading from the N-terminus, the 130-residue chain is Large ribosomal subunit protein bL12 (130 aa).

It belongs to the bacterial ribosomal protein bL12 family. In terms of assembly, homodimer. Part of the ribosomal stalk of the 50S ribosomal subunit. Forms a multimeric L10(L12)X complex, where L10 forms an elongated spine to which 2 to 4 L12 dimers bind in a sequential fashion. Binds GTP-bound translation factors.

Functionally, forms part of the ribosomal stalk which helps the ribosome interact with GTP-bound translation factors. Is thus essential for accurate translation. The sequence is that of Large ribosomal subunit protein bL12 from Synechococcus sp. (strain WH7803).